A 247-amino-acid polypeptide reads, in one-letter code: Probable transcriptional regulatory protein LAF_0541 (247 aa).

The tract at residues 1-22 (MSGHSKWHNIQGRKNAQDAKRG) is disordered.

The protein belongs to the TACO1 family.

Its subcellular location is the cytoplasm. The sequence is that of Probable transcriptional regulatory protein LAF_0541 from Limosilactobacillus fermentum (strain NBRC 3956 / LMG 18251) (Lactobacillus fermentum).